We begin with the raw amino-acid sequence, 73 residues long: UPF0270 protein SG2298 (73 aa).

This sequence belongs to the UPF0270 family.

This is UPF0270 protein SG2298 from Sodalis glossinidius (strain morsitans).